The primary structure comprises 160 residues: 2-C-methyl-D-erythritol 2,4-cyclodiphosphate synthase (160 aa).

The a divalent metal cation site is built by aspartate 10 and histidine 12. 4-CDP-2-C-methyl-D-erythritol 2-phosphate is bound by residues 10 to 12 and 36 to 37; these read DVH and HS. An a divalent metal cation-binding site is contributed by histidine 44. 4-CDP-2-C-methyl-D-erythritol 2-phosphate-binding positions include 58–60, 63–67, 102–108, 134–137, phenylalanine 141, and arginine 144; these read DIG, FPDTD, AQAPKMA, and TTTE.

Belongs to the IspF family. As to quaternary structure, homotrimer. It depends on a divalent metal cation as a cofactor.

It catalyses the reaction 4-CDP-2-C-methyl-D-erythritol 2-phosphate = 2-C-methyl-D-erythritol 2,4-cyclic diphosphate + CMP. The protein operates within isoprenoid biosynthesis; isopentenyl diphosphate biosynthesis via DXP pathway; isopentenyl diphosphate from 1-deoxy-D-xylulose 5-phosphate: step 4/6. Its function is as follows. Involved in the biosynthesis of isopentenyl diphosphate (IPP) and dimethylallyl diphosphate (DMAPP), two major building blocks of isoprenoid compounds. Catalyzes the conversion of 4-diphosphocytidyl-2-C-methyl-D-erythritol 2-phosphate (CDP-ME2P) to 2-C-methyl-D-erythritol 2,4-cyclodiphosphate (ME-CPP) with a corresponding release of cytidine 5-monophosphate (CMP). The chain is 2-C-methyl-D-erythritol 2,4-cyclodiphosphate synthase from Shewanella denitrificans (strain OS217 / ATCC BAA-1090 / DSM 15013).